Consider the following 472-residue polypeptide: Glutamate--tRNA ligase (472 aa).

Residues 8-18 (PSPTGFLHIGS) carry the 'HIGH' region motif. Positions 239-243 (KLSKR) match the 'KMSKS' region motif. Lys242 is an ATP binding site.

This sequence belongs to the class-I aminoacyl-tRNA synthetase family. Glutamate--tRNA ligase type 1 subfamily. In terms of assembly, monomer.

The protein resides in the cytoplasm. It carries out the reaction tRNA(Glu) + L-glutamate + ATP = L-glutamyl-tRNA(Glu) + AMP + diphosphate. In terms of biological role, catalyzes the attachment of glutamate to tRNA(Glu) in a two-step reaction: glutamate is first activated by ATP to form Glu-AMP and then transferred to the acceptor end of tRNA(Glu). This is Glutamate--tRNA ligase from Solibacter usitatus (strain Ellin6076).